The sequence spans 208 residues: uncharacterized protein (208 aa).

To E.coli YfjJ.

This is an uncharacterized protein from Escherichia coli (strain K12).